A 334-amino-acid chain; its full sequence is Proline-serine-threonine phosphatase-interacting protein 2 (334 aa).

In terms of domain architecture, F-BAR spans 4 to 264 (SLFKGNFWSA…SLEMCSIQRD (261 aa)). Positions 66 to 166 (GQSEINTLKR…AVSRSANLVN (101 aa)) form a coiled coil. Residues 295-322 (VPAGKATGPNLARRGPLPIPKSSPDDPN) are disordered. Tyr-323 and Tyr-329 each carry phosphotyrosine.

In terms of processing, phosphorylated on tyrosine.

It is found in the cytoplasm. The protein resides in the membrane. Binds to F-actin. May be involved in regulation of the actin cytoskeleton. This chain is Proline-serine-threonine phosphatase-interacting protein 2 (PSTPIP2), found in Homo sapiens (Human).